Here is a 2264-residue protein sequence, read N- to C-terminus: Protein Ycf2 (2264 aa).

1611–1618 provides a ligand contact to ATP; sequence GSIGTGRS.

This sequence belongs to the Ycf2 family.

Its subcellular location is the plastid. It localises to the chloroplast stroma. In terms of biological role, probable ATPase of unknown function. Its presence in a non-photosynthetic plant (Epifagus virginiana) and experiments in tobacco indicate that it has an essential function which is probably not related to photosynthesis. In Lactuca sativa (Garden lettuce), this protein is Protein Ycf2.